Consider the following 953-residue polypeptide: MSKKRLHEIAKEIGKSSKEVVEHAKYLGLDVKSHASSVEEADAKKIISSFSKASKPDVTASQAVKPKEVAQPSVTVVKETGSEHVEKTQVSKPKSRNFKAEREARAKEQAARKQANGSSHRSQERRGGYRQPNNHQTNEQGDKRITHRSQGDTNDKRIERKASNVSPRHDNHQLVGDRNRSFAKENHKNGRFTNQKKQGRQEPQSKSPKIDFKARAAALKAEQNAEYSRQSETRFRAQQEAKRLAELARQEAKEAALKAQAEEMSHREAALKSIEEAETKLKSSNISAKSTADNRRKKQARPEKNRELTHHSQEGQKKNKKSWNSQNQVRNQKNSNWNKNKKTKKGKNVKNTNTAPKPVTERKFHELPKEFEYTEGMTVAEIAKRIKREPAEIVKKLFMMGVMATQNQSLDGDTIELLMVDYGIEAKAKVEVDDADIERFFEDENYLNPENIVERAPVVTIMGHVDHGKTTLLDTLRNSRVATGEAGGITQHIGAYQIEEAGKKITFLDTPGHAAFTSMRARGASVTDITILIVAADDGVMPQTIEAINHSKAAGVPIIVAINKIDKPGANPERVIAELAEYGIISTAWGGECEFVEISAKFNKNIDELLETVLLVAEVEELKADPTVRAIGTVIEARLDKGKGAIATLLVQQGTLHVQDPIVVGNTFGRVRAMVNDLGRRVKSAEPSTPVSITGLNETPMAGDHFAVYADEKAARAAGEERSKRALLKQRQNTQRVSLDNLFDTLKAGEIKTVNVIIKADVQGSVEALAASLVKIEVEGVRVNVVHSAVGAINESDVTLAEASNAVIIGFNVRPTPQARQQADTDDVEIRLHSIIYKVIEEVEEAMKGKLDPVYQEKVLGEAIIRETFKVSKVGTIGGFMVINGKVTRDSSVRVIRDSVVIFDGKLASLKHYKDDVKEVGNAQEGGLMIENFNDLKVDDTIEAYIMEEIVRK.

Disordered stretches follow at residues 52 to 247 (KASK…LAEL) and 279 to 363 (TKLK…TERK). 3 stretches are compositionally biased toward basic and acidic residues: residues 80–89 (TGSEHVEKTQ), 98–111 (FKAE…EQAA), and 140–188 (QGDK…ENHK). The span at 191–207 (RFTNQKKQGRQEPQSKS) shows a compositional bias: polar residues. Basic and acidic residues predominate over residues 229–247 (RQSETRFRAQQEAKRLAEL). Polar residues predominate over residues 282 to 291 (KSSNISAKST). Basic and acidic residues predominate over residues 300–317 (ARPEKNRELTHHSQEGQK). The span at 322 to 338 (SWNSQNQVRNQKNSNWN) shows a compositional bias: low complexity. A compositionally biased stretch (basic residues) spans 339–348 (KNKKTKKGKN). The 170-residue stretch at 454-623 (ERAPVVTIMG…LLVAEVEELK (170 aa)) folds into the tr-type G domain. Positions 463 to 470 (GHVDHGKT) are G1. 463-470 (GHVDHGKT) is a GTP binding site. The tract at residues 488–492 (GITQH) is G2. Positions 509–512 (DTPG) are G3. GTP is bound by residues 509–513 (DTPGH) and 563–566 (NKID). The tract at residues 563–566 (NKID) is G4. Positions 599-601 (SAK) are G5.

This sequence belongs to the TRAFAC class translation factor GTPase superfamily. Classic translation factor GTPase family. IF-2 subfamily.

The protein resides in the cytoplasm. Its function is as follows. One of the essential components for the initiation of protein synthesis. Protects formylmethionyl-tRNA from spontaneous hydrolysis and promotes its binding to the 30S ribosomal subunits. Also involved in the hydrolysis of GTP during the formation of the 70S ribosomal complex. This is Translation initiation factor IF-2 from Streptococcus pyogenes serotype M5 (strain Manfredo).